Reading from the N-terminus, the 303-residue chain is Acetylglutamate kinase (303 aa).

Substrate-binding positions include 75-76, Arg-97, and Asn-194; that span reads GG.

The protein belongs to the acetylglutamate kinase family. ArgB subfamily.

It localises to the cytoplasm. It catalyses the reaction N-acetyl-L-glutamate + ATP = N-acetyl-L-glutamyl 5-phosphate + ADP. It participates in amino-acid biosynthesis; L-arginine biosynthesis; N(2)-acetyl-L-ornithine from L-glutamate: step 2/4. Functionally, catalyzes the ATP-dependent phosphorylation of N-acetyl-L-glutamate. The sequence is that of Acetylglutamate kinase from Gloeobacter violaceus (strain ATCC 29082 / PCC 7421).